A 359-amino-acid chain; its full sequence is Peptide chain release factor 1 (359 aa).

Glutamine 236 carries the N5-methylglutamine modification.

Belongs to the prokaryotic/mitochondrial release factor family. Post-translationally, methylated by PrmC. Methylation increases the termination efficiency of RF1.

The protein resides in the cytoplasm. Peptide chain release factor 1 directs the termination of translation in response to the peptide chain termination codons UAG and UAA. The sequence is that of Peptide chain release factor 1 from Streptococcus pyogenes serotype M3 (strain ATCC BAA-595 / MGAS315).